Consider the following 385-residue polypeptide: AA13 family lytic polysaccharide monooxygenase NCU08746 (385 aa).

The N-terminal stretch at 1–18 (MKFSIISVALASAITVDA) is a signal peptide. Histidine 19 contacts Cu(2+). Histidine 19 carries the post-translational modification Methylhistidine. Residues 19-248 (HGYLTIPFSR…AQVYLSCADI (230 aa)) enclose the Chitin-binding type-4 domain. Cysteine 40 and cysteine 43 form a disulfide bridge. Asparagine 54 is a glycosylation site (N-linked (GlcNAc...) asparagine). 6 cysteine pairs are disulfide-bonded: cysteine 66–cysteine 245, cysteine 102–cysteine 203, cysteine 118–cysteine 145, cysteine 153–cysteine 161, cysteine 167–cysteine 173, and cysteine 181–cysteine 192. Histidine 109 contributes to the Cu(2+) binding site. Tyrosine 242 lines the Cu(2+) pocket. The CBM20 domain occupies 278 to 385 (CTPAATVAVT…ESVAVESSWK (108 aa)). An N-linked (GlcNAc...) asparagine glycan is attached at asparagine 365.

The protein belongs to the polysaccharide monooxygenase AA13 family. Requires Cu(2+) as cofactor.

It localises to the secreted. The enzyme catalyses starch + reduced acceptor + O2 = D-glucono-1,5-lactone-terminated malto-oligosaccharides + short-chain malto-oligosaccharides + acceptor + H2O.. Functionally, starch-active lytic polysaccharide monooxygenase that oxidizes the C1 position of starch substrates, but not in cellulose or chitin. Catalysis by LPMOs requires the reduction of the active-site copper from Cu(II) to Cu(I) by a reducing agent and H(2)O(2) or O(2) as a cosubstrate. The protein is AA13 family lytic polysaccharide monooxygenase NCU08746 of Neurospora crassa (strain ATCC 24698 / 74-OR23-1A / CBS 708.71 / DSM 1257 / FGSC 987).